Consider the following 331-residue polypeptide: Isopenicillin N synthase (331 aa).

Isopenicillin N is bound by residues Arg-87, Tyr-91, Ser-183, and Tyr-189. Residues Arg-87, Tyr-91, Ser-183, Tyr-189, His-214, and Asp-216 each contribute to the N-[(5S)-5-amino-5-carboxypentanoyl]-L-cysteinyl-D-valine site. Positions 181–288 (LSSVVLIRYP…RQSLPFFVNL (108 aa)) constitute a Fe2OG dioxygenase domain. 3 residues coordinate Fe(2+): His-214, Asp-216, and His-270. Position 279 (Arg-279) interacts with 2-oxoglutarate. Ser-281 is an isopenicillin N binding site. An N-[(5S)-5-amino-5-carboxypentanoyl]-L-cysteinyl-D-valine-binding site is contributed by Ser-281.

The protein belongs to the iron/ascorbate-dependent oxidoreductase family. Requires Fe(2+) as cofactor.

It localises to the cytoplasm. The protein resides in the cytosol. The catalysed reaction is N-[(5S)-5-amino-5-carboxypentanoyl]-L-cysteinyl-D-valine + O2 = isopenicillin N + 2 H2O. It participates in antibiotic biosynthesis; penicillin G biosynthesis; penicillin G from L-alpha-aminoadipate and L-cysteine and L-valine: step 2/3. Functionally, isopenicillin N synthase; part of the gene cluster that mediates the biosynthesis of penicillin, the world's most important antibiotic. The first step of the pathway is performed by the trimodular NRPS acvA that produces the tripeptide N-[(5S)-5-amino-5-carboxypentanoyl]-L-cysteinyl-D-valine (LLD-ACV or ACV) via condensation of the 3 residues L-2-aminoadipate, L-cysteine and L-valine. The precursor amino acids for penicillin biosynthesis are withdrawn from the vacuolar amino acid pool by the MFS-type transporter penV. Each of the constituent amino acids of the tripeptide acv are activated as aminoacyl-adenylates with peptide bonds formed through the participation of amino acid thioester intermediates. The tripeptide ACV is then cyclized to form isopenicillin N (IPN) by the isopenicillin N synthase ipnA that forms the beta-lactam nucleus. Finally, the alpha-aminoadipyl side chain is exchanged for phenylacetic acid by the isopenicillin N acyltransferase aatA to yield penicillin. This step occurs in the peroxisomal matrix and the penM and paaT transporters are involved in the isopenicillin N and phenylacetic acid import into the peroxisome, respectively. The sequence is that of Isopenicillin N synthase from Penicillium rubens (strain ATCC 28089 / DSM 1075 / NRRL 1951 / Wisconsin 54-1255) (Penicillium chrysogenum).